The primary structure comprises 569 residues: Cell death protein 4 (569 aa).

The 91-residue stretch at Met1–Leu91 folds into the CARD domain. Positions Asp116 to Ile442 constitute an NB-ARC domain. ATP is bound by residues Phe131, Gly162–Val167, and Gln171. Ser166 contributes to the Mg(2+) binding site.

In terms of assembly, associates as an asymmetric homodimer with ced-9. Upon release from ced-9, forms an octamer, known as the apoptosome, and interacts with ced-3; the interaction results in ced-3 autoproteolytic cleavage and activation. The octamer (a tetramer of an asymmetric dimer) also interacts with two processed ced-3 to form a stable holoenzyme. Interacts with sex-determining protein fem-1. May form a complex composed of ced-3, ced-4 and mac-1 or of ced-9, ced-4 and mac-1. Within the complex, interacts with ced-4.

The protein resides in the mitochondrion. It is found in the cytoplasm. Its subcellular location is the perinuclear region. Plays a major role in programmed cell death (PCD, apoptosis). egl-1 binds to and directly inhibits the activity of ced-9, releasing the cell death activator ced-4 from a ced-9/ced-4 containing protein complex and allowing ced-4 to induce caspase ced-3 autoproteolytic cleavage and activation. Also forms a holoenzyme with processed ced-3 enhancing ced-3 activity. Component of the egl-1, ced-9, ced-4 and ced-3 apoptotic signaling cascade required for the initiation of programmed cell death in cells fated to die during embryonic and postembryonic development. During oogenesis, required for germline apoptosis downstream of ced-9 and upstream of ced-3 but independently of egl-1. May regulate germline apoptosis in response to DNA damage, probably downstream of let-60/ras and mpk-1 pathway. Regulates CEP neuron apoptosis in response to high Al(3+) levels. During male tail morphogenesis, promotes apoptosis of the tail-spike cell. During larval development, required for the elimination of transient presynaptic components downstream of egl-1 and ced-9 and upstream of ced-3 apoptotic pathway. Together with ain-1, a component of the miRNA-induced-silencing complex (miRISC), and probably upstream of ced-3, regulates temporal cell fate patterning during larval development. May play a role in resistance to S.typhimurium-mediated infection. In Caenorhabditis briggsae, this protein is Cell death protein 4.